A 453-amino-acid polypeptide reads, in one-letter code: Chromosomal replication initiator protein DnaA (453 aa).

Positions 1 to 74 are domain I, interacts with DnaA modulators; that stretch reads MKEKQFWNRI…GFEIYDAEIT (74 aa). Positions 74-113 are domain II; the sequence is TPHYIFTKPQDTTSSQVEEATNLTLYNYSPKLVSIPYSDT. Residues 114-331 form a domain III, AAA+ region region; sequence GLKEKYTFDN…GAINDITLIA (218 aa). The ATP site is built by glycine 158, glycine 160, lysine 161, and threonine 162. A domain IV, binds dsDNA region spans residues 332-453; it reads RVKKIKDITI…EIESIKKKIK (122 aa).

It belongs to the DnaA family. In terms of assembly, oligomerizes as a right-handed, spiral filament on DNA at oriC.

It is found in the cytoplasm. Functionally, plays an essential role in the initiation and regulation of chromosomal replication. ATP-DnaA binds to the origin of replication (oriC) to initiate formation of the DNA replication initiation complex once per cell cycle. Binds the DnaA box (a 9 base pair repeat at the origin) and separates the double-stranded (ds)DNA. Forms a right-handed helical filament on oriC DNA; dsDNA binds to the exterior of the filament while single-stranded (ss)DNA is stabiized in the filament's interior. The ATP-DnaA-oriC complex binds and stabilizes one strand of the AT-rich DNA unwinding element (DUE), permitting loading of DNA polymerase. After initiation quickly degrades to an ADP-DnaA complex that is not apt for DNA replication. Binds acidic phospholipids. The sequence is that of Chromosomal replication initiator protein DnaA from Streptococcus pneumoniae serotype 19F (strain G54).